The following is a 157-amino-acid chain: Protein EOLA1 (157 aa).

The ASCH domain maps to 6–92 (LSFRQPYAGL…IAGLIDIGET (87 aa)).

Belongs to the EOLA family. Interacts with MT2A.

May play a role in cell protection during the inflammatory response. In epithelial cells, negatively regulates IL6 production and apoptosis through the regulation of MT2A expression. The protein is Protein EOLA1 of Mus musculus (Mouse).